The chain runs to 440 residues: FAD-dependent monooxygenase afoD (440 aa).

A helical membrane pass occupies residues 10-30 (PLSIAIIGGGIIGLMTALGLL). Positions 41, 145, and 320 each coordinate FAD. Asparagine 352 is a glycosylation site (N-linked (GlcNAc...) asparagine).

It belongs to the paxM FAD-dependent monooxygenase family. It depends on FAD as a cofactor.

The protein localises to the membrane. FAD-dependent monooxygenase; part of the gene cluster that mediates the biosynthesis of asperfuranone, a probable antitumor agent. The polyketide synthase afoG is responsible for producing the 3,5-dimethyloctadienone moiety from acetyl-CoA, three malonyl-CoA, and two S-adenosyl methionines (SAM). The 3,5-dimethyloctadienone moiety is then loaded onto the SAT domain of afoE and extended with four malonyl-CoA and one SAM, which leads to the formation of 2,4-dihydroxy-6-(5,7-dimethyl-2-oxo-trans-3-trans-5-nonadienyl)-3-methylbenzaldehyde (compound 2) after reductive release and aldol condensation. AfoD is the next enzyme in the biosynthesis sequence and hydroxylates the side chain at the benzylic position of compound 2. After benzylic hydroxylation, a furan ring is formed after five-member ring hemiacetal formation and water elimination. AfoF and afoC are proposed to oxidize the R-diketone proton and to reduce the unconjugated carbonyl group, respectively, to generate asperfuranone. Since no intermediates could be isolated from afoF and afoC deletants, the sequence of these two enzymes is not fully understood. Moreover, since afoC deletant still produces a small amount of asperfuranone, other endogenous oxidoreductases might catalyze the same reaction with much less efficiency. The protein is FAD-dependent monooxygenase afoD of Emericella nidulans (strain FGSC A4 / ATCC 38163 / CBS 112.46 / NRRL 194 / M139) (Aspergillus nidulans).